A 429-amino-acid chain; its full sequence is Adenylosuccinate synthetase (429 aa).

Residues 12 to 18 and 40 to 42 contribute to the GTP site; these read GDEGKGK and GHT. Catalysis depends on aspartate 13, which acts as the Proton acceptor. Mg(2+) contacts are provided by aspartate 13 and glycine 40. IMP contacts are provided by residues 13–16, 38–41, threonine 129, arginine 143, glutamine 223, threonine 238, and arginine 302; these read DEGK and NAGH. The active-site Proton donor is the histidine 41. Position 298–304 (298–304) interacts with substrate; it reads VVTGRKR. GTP-binding positions include arginine 304, 330-332, and 412-414; these read KLD and STS.

Belongs to the adenylosuccinate synthetase family. As to quaternary structure, homodimer. Mg(2+) is required as a cofactor.

Its subcellular location is the cytoplasm. It catalyses the reaction IMP + L-aspartate + GTP = N(6)-(1,2-dicarboxyethyl)-AMP + GDP + phosphate + 2 H(+). It functions in the pathway purine metabolism; AMP biosynthesis via de novo pathway; AMP from IMP: step 1/2. Plays an important role in the de novo pathway of purine nucleotide biosynthesis. Catalyzes the first committed step in the biosynthesis of AMP from IMP. This chain is Adenylosuccinate synthetase, found in Brucella suis (strain ATCC 23445 / NCTC 10510).